Reading from the N-terminus, the 158-residue chain is Single-stranded DNA-binding protein 2 (158 aa).

An SSB domain is found at 1 to 107 (MNETIVCVVG…IDALAVGHDL (107 aa)). The segment at 109 to 158 (RGTSAFRRPSAKDGEAGVSPAARPEPNWETEPGSQPSVEHQPQPEPAGVT) is disordered.

Homotetramer.

This is Single-stranded DNA-binding protein 2 (ssb2) from Streptomyces avermitilis (strain ATCC 31267 / DSM 46492 / JCM 5070 / NBRC 14893 / NCIMB 12804 / NRRL 8165 / MA-4680).